The sequence spans 382 residues: NADH-ubiquinone oxidoreductase chain 2 (382 aa).

12 helical membrane-spanning segments follow: residues 1 to 21 (MIELDLCFGLLLLILFGLLSL), 33 to 53 (FICQCWLVMITPLEVQDFALC), 54 to 74 (ILTVVLLQSFHSFEALLFLLL), 88 to 108 (LVSFYVCLEAQTLCVVVLCGL), 123 to 143 (LKFLLLSAMVSGMALFWFSAM), 158 to 178 (FWILLVMLFKLGVAPMHMWSV), 188 to 208 (LLLYLSTAPKLSLFTFWASSW), 212 to 232 (FSVGVFILFSMFIGSIGAYGQ), 239 to 259 (FAYSTINEIGLLLLAVETAGF), 260 to 280 (HTLYQHLGIYIITQLLLWNLT), 284 to 304 (LFALCAVSLAGLPPFAGFFGK), and 305 to 325 (AWIFWHAMSVQAFSLLAAALF).

This sequence belongs to the complex I subunit 2 family.

The protein resides in the mitochondrion inner membrane. It carries out the reaction a ubiquinone + NADH + 5 H(+)(in) = a ubiquinol + NAD(+) + 4 H(+)(out). Its function is as follows. Core subunit of the mitochondrial membrane respiratory chain NADH dehydrogenase (Complex I) that is believed to belong to the minimal assembly required for catalysis. Complex I functions in the transfer of electrons from NADH to the respiratory chain. The immediate electron acceptor for the enzyme is believed to be ubiquinone. The polypeptide is NADH-ubiquinone oxidoreductase chain 2 (ND2) (Chlamydomonas reinhardtii (Chlamydomonas smithii)).